Reading from the N-terminus, the 410-residue chain is F-box protein At3g61340 (410 aa).

The F-box domain occupies 17–66 (EEKSERIPFDLVIEILLRLPVKSIARFRYVSKLWQSTLRGQHFTESYLTI).

The protein is F-box protein At3g61340 of Arabidopsis thaliana (Mouse-ear cress).